Consider the following 589-residue polypeptide: Pentalenolactone D synthase (589 aa).

FAD-binding positions include 60 to 61, 82 to 83, 90 to 91, 102 to 103, Tyr108, Val152, and Met491; these read IG, DE, TW, and DV.

It belongs to the FAD-binding monooxygenase family. FAD serves as cofactor.

It catalyses the reaction 1-deoxy-11-oxopentalenate + NADPH + O2 + H(+) = pentalenolactone D + NADP(+) + H2O. It participates in antibiotic biosynthesis; pentalenolactone biosynthesis. Functionally, catalyzes the flavin-dependent Baeyer-Villiger oxidation of 1-deoxy-11-oxopentalenic acid to pentalenolactone D in the biosynthesis of pentalenolactone antibiotic. The protein is Pentalenolactone D synthase (pntE) of Streptomyces arenae.